The following is a 46-amino-acid chain: Protein PsbN (46 aa).

A helical transmembrane segment spans residues 7-27 (ALSVAIGVLAVLFGLTGFGVY).

Belongs to the PsbN family.

The protein localises to the cellular thylakoid membrane. Functionally, may play a role in photosystem I and II biogenesis. This is Protein PsbN from Synechococcus sp. (strain CC9605).